The chain runs to 216 residues: Regulatory protein RecX (216 aa).

The protein belongs to the RecX family.

It localises to the cytoplasm. Modulates RecA activity. The sequence is that of Regulatory protein RecX from Clostridium tetani (strain Massachusetts / E88).